Consider the following 69-residue polypeptide: MRFLNIFLFFAAIIAFATASQVFEEDEIDMEPRITCDLIGNERLCVLHCLAKGFRGGWCDGRKVCNCRR.

A signal peptide spans 1–19; the sequence is MRFLNIFLFFAAIIAFATA. Positions 20–33 are excised as a propeptide; that stretch reads SQVFEEDEIDMEPR. Intrachain disulfides connect C36-C59, C45-C65, and C49-C67.

This sequence belongs to the asilidin-12 family. Expressed by the venom gland.

The protein resides in the secreted. Moderately increases Kv11.1/KCNH2/ERG1 currents and shifts the voltage-dependence of the channel activation to hyperpolarised potentials. In vivo, induces neurotoxic effects when injected into insects (tested on L.cuprina and A.domesticus). This chain is U-Asilidin(12)-Dg3a, found in Dolopus genitalis (Giant Australian assassin fly).